Here is an 86-residue protein sequence, read N- to C-terminus: RNA-binding protein Hfq (86 aa).

The 60-residue stretch at 9–68 (DPFLNALRRERIPVSIYLVNGIKLQGQIESFDQFVILLKNTVNQMVYKHAISTVVPARPV) folds into the Sm domain. The disordered stretch occupies residues 65-86 (ARPVSHHSGERGSDRPSEKSED). The span at 71-86 (HSGERGSDRPSEKSED) shows a compositional bias: basic and acidic residues.

This sequence belongs to the Hfq family. In terms of assembly, homohexamer.

Its function is as follows. RNA chaperone that binds small regulatory RNA (sRNAs) and mRNAs to facilitate mRNA translational regulation in response to envelope stress, environmental stress and changes in metabolite concentrations. Also binds with high specificity to tRNAs. This Vibrio vulnificus (strain YJ016) protein is RNA-binding protein Hfq.